Reading from the N-terminus, the 244-residue chain is Type III pantothenate kinase (244 aa).

8 to 15 (DQGNSACK) contributes to the ATP binding site. Substrate-binding positions include Tyr88 and 94–97 (GADR). Residue Asp96 is the Proton acceptor of the active site. Residue Asp117 coordinates K(+). Thr120 is a binding site for ATP. Thr175 is a binding site for substrate.

The protein belongs to the type III pantothenate kinase family. As to quaternary structure, homodimer. It depends on NH4(+) as a cofactor. K(+) serves as cofactor.

Its subcellular location is the cytoplasm. It catalyses the reaction (R)-pantothenate + ATP = (R)-4'-phosphopantothenate + ADP + H(+). The protein operates within cofactor biosynthesis; coenzyme A biosynthesis; CoA from (R)-pantothenate: step 1/5. Functionally, catalyzes the phosphorylation of pantothenate (Pan), the first step in CoA biosynthesis. The protein is Type III pantothenate kinase of Porphyromonas gingivalis (strain ATCC BAA-308 / W83).